Reading from the N-terminus, the 503-residue chain is 2-(3-amino-3-carboxypropyl)histidine synthase subunit 2 (503 aa).

[4Fe-4S] cluster is bound by residues C93, C114, and C334. Residues 464 to 503 (GLDSVDEGEGPSKLYEGQSGIAKGYVGEGSKEKIQRDFGK) form a disordered region. Positions 492-503 (GSKEKIQRDFGK) are enriched in basic and acidic residues.

Belongs to the DPH1/DPH2 family. DPH2 subfamily. As to quaternary structure, component of the 2-(3-amino-3-carboxypropyl)histidine synthase complex composed of dph1, dph2, dph3 and a NADH-dependent reductase, predominantly cbr1. [4Fe-4S] cluster is required as a cofactor.

It localises to the cytoplasm. The protein operates within protein modification; peptidyl-diphthamide biosynthesis. Functionally, required for the first step of diphthamide biosynthesis, a post-translational modification of histidine which occurs in elongation factor 2. Dph1 and dph2 transfer a 3-amino-3-carboxypropyl (ACP) group from S-adenosyl-L-methionine (SAM) to a histidine residue, the reaction is assisted by a reduction system comprising dph3 and a NADH-dependent reductase, predominantly cbr1. Facilitates the reduction of the catalytic iron-sulfur cluster found in the dph1 subunit. This Schizosaccharomyces pombe (strain 972 / ATCC 24843) (Fission yeast) protein is 2-(3-amino-3-carboxypropyl)histidine synthase subunit 2.